We begin with the raw amino-acid sequence, 452 residues long: Gastrin/cholecystokinin type B receptor (452 aa).

Residues 1 to 21 form a disordered region; sequence MELLKLNRSVQGPGPGSGSSL. Topologically, residues 1–57 are extracellular; sequence MELLKLNRSVQGPGPGSGSSLCRPGVSLLNSSSAGNLSCDPPRIRGTGTRELEMAIR. N-linked (GlcNAc...) asparagine glycosylation is found at Asn7, Asn30, and Asn36. Residues 58–79 form a helical membrane-spanning segment; the sequence is ITLYAVIFLMSVGGNVLIIVVL. The Cytoplasmic segment spans residues 80-87; it reads GLSRRLRT. Residues 88–109 traverse the membrane as a helical segment; that stretch reads VTNAFLLSLAVSDLLLAVACMP. Residues 110–131 are Extracellular-facing; that stretch reads FTLLPNLMGTFIFGTVICKAIS. Cys127 and Cys205 are joined by a disulfide. The chain crosses the membrane as a helical span at residues 132 to 150; the sequence is YLMGVSVSVSTLNLVAIAL. Residues 151-170 are Cytoplasmic-facing; it reads ERYSAICRPLQARVWQTRSH. A helical transmembrane segment spans residues 171–189; that stretch reads AARVILATWLLSGLLMVPY. The Extracellular segment spans residues 190–219; the sequence is PVYTMVQPVGPRVLQCMHRWPSARVQQTWS. Residues 220 to 242 form a helical membrane-spanning segment; sequence VLLLLLLFFIPGVVIAVAYGLIS. The Cytoplasmic portion of the chain corresponds to 243–338; sequence RELYLGLHFD…KLLAKKRVVR (96 aa). The interval 257 to 286 is disordered; the sequence is SETQSRARNQGGLPGGAAPGPVHQNGGCRP. Residues 339-360 traverse the membrane as a helical segment; that stretch reads MLLVIVLLFFLCWLPVYSVNTW. Over 361–378 the chain is Extracellular; the sequence is RAFDGPGAQRALSGAPIS. A helical transmembrane segment spans residues 379–399; the sequence is FIHLLSYVSACVNPLVYCFMH. The Cytoplasmic segment spans residues 400 to 452; that stretch reads RRFRQACLDTCARCCPRPPRARPQPLPDEDPPTPSIASLSRLSYTTISTLGPG. Cys413 is lipidated: S-palmitoyl cysteine. The tract at residues 421–452 is disordered; that stretch reads RPQPLPDEDPPTPSIASLSRLSYTTISTLGPG. Over residues 434 to 452 the composition is skewed to polar residues; that stretch reads SIASLSRLSYTTISTLGPG.

It belongs to the G-protein coupled receptor 1 family. Parietal cells, pancreas, brain and various neoplastic tissues.

It is found in the cell membrane. Functionally, receptor for gastrin and cholecystokinin. The CCK-B receptors occur throughout the central nervous system where they modulate anxiety, analgesia, arousal, and neuroleptic activity. This receptor mediates its action by association with G proteins that activate a phosphatidylinositol-calcium second messenger system. The chain is Gastrin/cholecystokinin type B receptor (Cckbr) from Rattus norvegicus (Rat).